Reading from the N-terminus, the 81-residue chain is Putative defensin-like protein 265 (81 aa).

The signal sequence occupies residues 1–26; that stretch reads MEKTVSRKVVVLAILLSLSCLCIAKA. Cystine bridges form between cysteine 48-cysteine 66, cysteine 54-cysteine 71, and cysteine 58-cysteine 73.

The protein belongs to the DEFL family.

The protein resides in the secreted. In Arabidopsis thaliana (Mouse-ear cress), this protein is Putative defensin-like protein 265.